A 901-amino-acid polypeptide reads, in one-letter code: Vacuolar protein sorting-associated protein 41 homolog (901 aa).

Residues 1-37 (MDETHENEASDSFDPVFENSYHDDVTFNTEDDDEPPL) are disordered. Residues 618–760 (LRLLLDNADS…VAEFPAHFSQ (143 aa)) form a CHCR repeat. The segment at 839–893 (CSLCAQIIINSNQETTKKFSDIKVFKCGHIFHLACSTSEMERRQSIEEGLCIACS) adopts an RING-type; atypical zinc-finger fold.

The protein belongs to the VPS41 family. As to quaternary structure, probable component of the homotypic fusion and vacuole protein sorting (HOPS) complex consisting of the core class C Vps proteins vps-11, vps-16, vps-18, and which further associates with vps-33.1, vps-39 and vps-41.

It localises to the endosome membrane. It is found in the late endosome membrane. The protein localises to the early endosome membrane. The protein resides in the lysosome membrane. Its subcellular location is the golgi apparatus. It localises to the trans-Golgi network. It is found in the cytoplasmic vesicle. The protein localises to the clathrin-coated vesicle. The protein resides in the cytoplasm. Its subcellular location is the cytosol. Plays a role in vesicle-mediated protein trafficking to lysosomal compartments including the endocytic membrane transport pathways. Believed to act in part as a core component of the putative HOPS endosomal tethering complex which is proposed to be involved in the rab-5-to-rab-7 endosome conversion probably implicating sand-1, and via binding SNAREs and SNARE complexes to mediate tethering and docking events during SNARE-mediated membrane fusion. The HOPS complex is proposed to be recruited to rab-7 on the late endosomal membrane and to regulate late endocytic, phagocytic and autophagic traffic towards lysosomes. Within the HOPS complex, contributes to the normal development of gut granules in the adult intestine. May mediate the tethering of autophagosomes with lysosomes. Has a role in the negative regulation of apoptosis. Required for uptake of exogenous dsRNA which is used in experimental RNA silencing. The sequence is that of Vacuolar protein sorting-associated protein 41 homolog from Caenorhabditis elegans.